The primary structure comprises 497 residues: Cytochrome P450 71A18 (497 aa).

A helical membrane pass occupies residues 4–24 (TLMVSLCLTTLLTLLLLKKFL). C439 serves as a coordination point for heme.

It belongs to the cytochrome P450 family. It depends on heme as a cofactor.

It localises to the membrane. The chain is Cytochrome P450 71A18 (CYP71A18) from Arabidopsis thaliana (Mouse-ear cress).